The primary structure comprises 312 residues: Porphobilinogen deaminase (312 aa).

S-(dipyrrolylmethanemethyl)cysteine is present on cysteine 241.

It belongs to the HMBS family. In terms of assembly, monomer. Dipyrromethane serves as cofactor.

It catalyses the reaction 4 porphobilinogen + H2O = hydroxymethylbilane + 4 NH4(+). The protein operates within porphyrin-containing compound metabolism; protoporphyrin-IX biosynthesis; coproporphyrinogen-III from 5-aminolevulinate: step 2/4. It participates in porphyrin-containing compound metabolism; chlorophyll biosynthesis. Tetrapolymerization of the monopyrrole PBG into the hydroxymethylbilane pre-uroporphyrinogen in several discrete steps. In Chlorobaculum tepidum (strain ATCC 49652 / DSM 12025 / NBRC 103806 / TLS) (Chlorobium tepidum), this protein is Porphobilinogen deaminase.